We begin with the raw amino-acid sequence, 219 residues long: Octanoyltransferase (219 aa).

The BPL/LPL catalytic domain occupies 32 to 207 (SSSPDQLWIV…TFSHNLGYQN (176 aa)). Substrate-binding positions include 71 to 78 (RGGQVTYH), 138 to 140 (SLG), and 151 to 153 (GLA). Catalysis depends on Cys169, which acts as the Acyl-thioester intermediate.

The protein belongs to the LipB family.

Its subcellular location is the cytoplasm. The catalysed reaction is octanoyl-[ACP] + L-lysyl-[protein] = N(6)-octanoyl-L-lysyl-[protein] + holo-[ACP] + H(+). Its pathway is protein modification; protein lipoylation via endogenous pathway; protein N(6)-(lipoyl)lysine from octanoyl-[acyl-carrier-protein]: step 1/2. Its function is as follows. Catalyzes the transfer of endogenously produced octanoic acid from octanoyl-acyl-carrier-protein onto the lipoyl domains of lipoate-dependent enzymes. Lipoyl-ACP can also act as a substrate although octanoyl-ACP is likely to be the physiological substrate. This Shewanella woodyi (strain ATCC 51908 / MS32) protein is Octanoyltransferase.